We begin with the raw amino-acid sequence, 442 residues long: Trigger factor (442 aa).

The PPIase FKBP-type domain occupies 162 to 247 (GDQVTIDAIG…IKAVHTSEPT (86 aa)).

It belongs to the FKBP-type PPIase family. Tig subfamily.

The protein localises to the cytoplasm. The enzyme catalyses [protein]-peptidylproline (omega=180) = [protein]-peptidylproline (omega=0). In terms of biological role, involved in protein export. Acts as a chaperone by maintaining the newly synthesized protein in an open conformation. Functions as a peptidyl-prolyl cis-trans isomerase. The chain is Trigger factor from Rickettsia canadensis (strain McKiel).